The primary structure comprises 232 residues: MAALRYKADFLKASIDGGVLKFGSFELKSKRISPYFFNAGDFYRADLLQAISTAYAKCIIEAHKSGQLDFDIVFGPAYKGIPLATAATDKLAQLDPETYGKICYSFDRKEAKDHGEGGNIVGAPLKGKRILIVDDVITAGTAKREAIAKIEKEGGIVAGIVVALDRMEKLPAADGDDSKPGPSAMVSSARSTAIPIFAILTLDDIIEGMRGLASPEDVKKTEEYRAKYKATD.

Residue Lys-28 coordinates 5-phospho-alpha-D-ribose 1-diphosphate. Residue 36 to 37 participates in orotate binding; sequence FF. 5-phospho-alpha-D-ribose 1-diphosphate is bound by residues 78 to 79, Arg-108, Lys-109, Lys-112, His-114, and 134 to 142; these read YK and DDVITAGTA. Residues Thr-138 and Arg-166 each coordinate orotate.

The protein belongs to the purine/pyrimidine phosphoribosyltransferase family. PyrE subfamily. Homodimer.

It carries out the reaction orotidine 5'-phosphate + diphosphate = orotate + 5-phospho-alpha-D-ribose 1-diphosphate. It functions in the pathway pyrimidine metabolism; UMP biosynthesis via de novo pathway; UMP from orotate: step 1/2. Its function is as follows. Catalyzes the transfer of a ribosyl phosphate group from 5-phosphoribose 1-diphosphate to orotate, leading to the formation of orotidine monophosphate (OMP). This chain is Orotate phosphoribosyltransferase (URA5), found in Sordaria macrospora.